A 343-amino-acid chain; its full sequence is Programmed cell death protein 2 (343 aa).

Cysteine 134, cysteine 137, cysteine 145, cysteine 148, cysteine 154, histidine 158, histidine 167, and cysteine 171 together coordinate Zn(2+). An MYND-type; atypical zinc finger spans residues 134 to 171; it reads CRVCGCLAPMTCSRCKQAHYCSKEHQTLDWRLGHKQAC.

Post-translationally, ubiquitinated by PRKN, promoting proteasomal degradation.

It localises to the nucleus. Its function is as follows. May be a DNA-binding protein with a regulatory function. May play an important role in cell death and/or in regulation of cell proliferation. This Mus musculus (Mouse) protein is Programmed cell death protein 2 (Pdcd2).